Here is a 393-residue protein sequence, read N- to C-terminus: Alpha-1,2 mannosyltransferase KTR1 (393 aa).

Topologically, residues M1–K16 are cytoplasmic. The helical; Signal-anchor for type II membrane protein transmembrane segment at L17–A34 threads the bilayer. The stem region stretch occupies residues Q35–G68. At Q35–G393 the chain is on the lumenal side. A catalytic region spans residues P69 to G393. An N-linked (GlcNAc...) asparagine glycan is attached at N120. E280 (nucleophile) is an active-site residue.

Belongs to the glycosyltransferase 15 family. Mn(2+) serves as cofactor. In terms of processing, N-glycosylated.

It localises to the golgi apparatus membrane. It functions in the pathway protein modification; protein glycosylation. In terms of biological role, mannosyltransferase that transfers a mannose residue from GDP-mannose to a range of acceptors in vitro, forming an alpha-(1-&gt;2)-D-mannosyl-D-mannose linkage. The polypeptide is Alpha-1,2 mannosyltransferase KTR1 (KTR1) (Saccharomyces cerevisiae (strain ATCC 204508 / S288c) (Baker's yeast)).